We begin with the raw amino-acid sequence, 267 residues long: Hydroxyethylthiazole kinase 2 (267 aa).

Met41 contributes to the substrate binding site. The ATP site is built by Lys116 and Thr166. Gly193 contributes to the substrate binding site.

Belongs to the Thz kinase family. It depends on Mg(2+) as a cofactor.

It carries out the reaction 5-(2-hydroxyethyl)-4-methylthiazole + ATP = 4-methyl-5-(2-phosphooxyethyl)-thiazole + ADP + H(+). It functions in the pathway cofactor biosynthesis; thiamine diphosphate biosynthesis; 4-methyl-5-(2-phosphoethyl)-thiazole from 5-(2-hydroxyethyl)-4-methylthiazole: step 1/1. Functionally, catalyzes the phosphorylation of the hydroxyl group of 4-methyl-5-beta-hydroxyethylthiazole (THZ). This chain is Hydroxyethylthiazole kinase 2, found in Streptococcus pneumoniae (strain 70585).